We begin with the raw amino-acid sequence, 375 residues long: Queuine tRNA-ribosyltransferase (375 aa).

The active-site Proton acceptor is Asp-90. Substrate-binding positions include 90 to 94 (DSGGF), Asp-144, Gln-190, and Gly-217. An RNA binding region spans residues 248–254 (GIGTPHY). Asp-267 serves as the catalytic Nucleophile. Positions 272-276 (TRIAR) are RNA binding; important for wobble base 34 recognition. The Zn(2+) site is built by Cys-305, Cys-307, Cys-310, and His-336.

It belongs to the queuine tRNA-ribosyltransferase family. In terms of assembly, homodimer. Within each dimer, one monomer is responsible for RNA recognition and catalysis, while the other monomer binds to the replacement base PreQ1. Requires Zn(2+) as cofactor.

The enzyme catalyses 7-aminomethyl-7-carbaguanine + guanosine(34) in tRNA = 7-aminomethyl-7-carbaguanosine(34) in tRNA + guanine. It functions in the pathway tRNA modification; tRNA-queuosine biosynthesis. Catalyzes the base-exchange of a guanine (G) residue with the queuine precursor 7-aminomethyl-7-deazaguanine (PreQ1) at position 34 (anticodon wobble position) in tRNAs with GU(N) anticodons (tRNA-Asp, -Asn, -His and -Tyr). Catalysis occurs through a double-displacement mechanism. The nucleophile active site attacks the C1' of nucleotide 34 to detach the guanine base from the RNA, forming a covalent enzyme-RNA intermediate. The proton acceptor active site deprotonates the incoming PreQ1, allowing a nucleophilic attack on the C1' of the ribose to form the product. After dissociation, two additional enzymatic reactions on the tRNA convert PreQ1 to queuine (Q), resulting in the hypermodified nucleoside queuosine (7-(((4,5-cis-dihydroxy-2-cyclopenten-1-yl)amino)methyl)-7-deazaguanosine). This chain is Queuine tRNA-ribosyltransferase, found in Borrelia duttonii (strain Ly).